Here is a 596-residue protein sequence, read N- to C-terminus: Arrestin domain-containing protein C31A2.12 (596 aa).

A helical membrane pass occupies residues 194 to 211; the sequence is AYAIGSYIPIHFVLVPLL. Disordered regions lie at residues 363–387 and 405–446; these read NLDT…TYAS and QQQP…VITR. Threonine 373 and threonine 374 each carry phosphothreonine. Polar residues-rich tracts occupy residues 405-420 and 430-446; these read QQQP…SPSN and SLGS…VITR. Residues serine 452, serine 474, serine 493, and serine 497 each carry the phosphoserine modification. Residues 493–596 are disordered; that stretch reads SRPPSPGIVT…MLPSGFSRRN (104 aa). Phosphothreonine is present on residues threonine 502 and threonine 507. Residues 504–522 are compositionally biased toward polar residues; sequence PQRTSPSFFVSPTESTRQS. Serine 514 is modified (phosphoserine). Over residues 531–555 the composition is skewed to low complexity; sequence HSTSSSSGISPSHSSASLAHLSQAS.

It belongs to the arrestin family.

It is found in the membrane. In Schizosaccharomyces pombe (strain 972 / ATCC 24843) (Fission yeast), this protein is Arrestin domain-containing protein C31A2.12.